Here is a 369-residue protein sequence, read N- to C-terminus: Phenylalanine--tRNA ligase alpha subunit (369 aa).

Residue Glu269 participates in Mg(2+) binding.

It belongs to the class-II aminoacyl-tRNA synthetase family. Phe-tRNA synthetase alpha subunit type 1 subfamily. As to quaternary structure, tetramer of two alpha and two beta subunits. It depends on Mg(2+) as a cofactor.

Its subcellular location is the cytoplasm. It catalyses the reaction tRNA(Phe) + L-phenylalanine + ATP = L-phenylalanyl-tRNA(Phe) + AMP + diphosphate + H(+). This is Phenylalanine--tRNA ligase alpha subunit from Brucella anthropi (strain ATCC 49188 / DSM 6882 / CCUG 24695 / JCM 21032 / LMG 3331 / NBRC 15819 / NCTC 12168 / Alc 37) (Ochrobactrum anthropi).